We begin with the raw amino-acid sequence, 434 residues long: Serine hydroxymethyltransferase (434 aa).

Residues Leu-132 and 136–138 each bind (6S)-5,6,7,8-tetrahydrofolate; that span reads GHL. N6-(pyridoxal phosphate)lysine is present on Lys-241.

The protein belongs to the SHMT family. Homodimer. Pyridoxal 5'-phosphate serves as cofactor.

The protein resides in the cytoplasm. The catalysed reaction is (6R)-5,10-methylene-5,6,7,8-tetrahydrofolate + glycine + H2O = (6S)-5,6,7,8-tetrahydrofolate + L-serine. It functions in the pathway one-carbon metabolism; tetrahydrofolate interconversion. It participates in amino-acid biosynthesis; glycine biosynthesis; glycine from L-serine: step 1/1. Its function is as follows. Catalyzes the reversible interconversion of serine and glycine with tetrahydrofolate (THF) serving as the one-carbon carrier. This reaction serves as the major source of one-carbon groups required for the biosynthesis of purines, thymidylate, methionine, and other important biomolecules. Also exhibits THF-independent aldolase activity toward beta-hydroxyamino acids, producing glycine and aldehydes, via a retro-aldol mechanism. The polypeptide is Serine hydroxymethyltransferase (Kineococcus radiotolerans (strain ATCC BAA-149 / DSM 14245 / SRS30216)).